The sequence spans 302 residues: Ribosomal protein L11 methyltransferase (302 aa).

S-adenosyl-L-methionine contacts are provided by T155, G176, D198, and N239.

This sequence belongs to the methyltransferase superfamily. PrmA family.

Its subcellular location is the cytoplasm. The enzyme catalyses L-lysyl-[protein] + 3 S-adenosyl-L-methionine = N(6),N(6),N(6)-trimethyl-L-lysyl-[protein] + 3 S-adenosyl-L-homocysteine + 3 H(+). Its function is as follows. Methylates ribosomal protein L11. This Caldicellulosiruptor saccharolyticus (strain ATCC 43494 / DSM 8903 / Tp8T 6331) protein is Ribosomal protein L11 methyltransferase.